We begin with the raw amino-acid sequence, 398 residues long: Small ribosomal subunit protein uS3m (398 aa).

The protein belongs to the universal ribosomal protein uS3 family. In terms of assembly, component of the mitochondrial small ribosomal subunit (mt-SSU). Mature yeast 74S mitochondrial ribosomes consist of a small (37S) and a large (54S) subunit. The 37S small subunit contains a 15S ribosomal RNA (15S mt-rRNA) and 34 different proteins. The 54S large subunit contains a 21S rRNA (21S mt-rRNA) and 46 different proteins. uS3m, uS4m and uS5m form the narrow entry site of the mRNA channel.

Its subcellular location is the mitochondrion. Its function is as follows. Component of the mitochondrial ribosome (mitoribosome), a dedicated translation machinery responsible for the synthesis of mitochondrial genome-encoded proteins, including at least some of the essential transmembrane subunits of the mitochondrial respiratory chain. The mitoribosomes are attached to the mitochondrial inner membrane and translation products are cotranslationally integrated into the membrane. uS3m is essential for mitochondrial protein synthesis and required for the maturation of small ribosomal subunits. This chain is Small ribosomal subunit protein uS3m (VAR1), found in Saccharomyces cerevisiae (strain ATCC 204508 / S288c) (Baker's yeast).